The primary structure comprises 511 residues: Inositol-3-phosphate synthase isozyme 1 (511 aa).

NAD(+)-binding residues include G71, G72, N73, N74, D144, I181, Q191, R194, T231, A232, N233, T234, G282, S283, D307, S310, N341, N342, D343, K356, A394, D395, D423, and S424.

The protein belongs to the myo-inositol 1-phosphate synthase family. As to quaternary structure, homotrimer or homotetramer. Interacts with ATXR5 and ATXR6. NAD(+) serves as cofactor. In terms of tissue distribution, expressed in siliques, leaves, roots, seed endosperm, but not in embryos. Highest expression in leaves, but restricted to vascular tissue in older leaves.

It is found in the cytoplasm. Its subcellular location is the cytosol. The protein resides in the nucleus. The catalysed reaction is D-glucose 6-phosphate = 1D-myo-inositol 3-phosphate. Its pathway is polyol metabolism; myo-inositol biosynthesis; myo-inositol from D-glucose 6-phosphate: step 1/2. In terms of biological role, key enzyme in myo-inositol biosynthesis pathway that catalyzes the conversion of glucose 6-phosphate to 1-myo-inositol 1-phosphate in a NAD-dependent manner. Catalyzes the majority of myo-inositol synthesis required for plant growth and development. Acts as a repressor of programmed cell death and protects plant cells against cell death under high light intensity or long days. Controls its own transcription by inhibiting ATXR6 activity. Reduces the deposition of inhibitory histone marks on its own promoter. This is Inositol-3-phosphate synthase isozyme 1 (IPS1) from Arabidopsis thaliana (Mouse-ear cress).